Consider the following 147-residue polypeptide: Large ribosomal subunit protein bL9 (147 aa).

The protein belongs to the bacterial ribosomal protein bL9 family.

Functionally, binds to the 23S rRNA. The sequence is that of Large ribosomal subunit protein bL9 from Clostridium botulinum (strain Alaska E43 / Type E3).